We begin with the raw amino-acid sequence, 129 residues long: Small ribosomal subunit protein uS11 (129 aa).

This sequence belongs to the universal ribosomal protein uS11 family. Part of the 30S ribosomal subunit. Interacts with proteins S7 and S18. Binds to IF-3.

Located on the platform of the 30S subunit, it bridges several disparate RNA helices of the 16S rRNA. Forms part of the Shine-Dalgarno cleft in the 70S ribosome. In Thermosipho melanesiensis (strain DSM 12029 / CIP 104789 / BI429), this protein is Small ribosomal subunit protein uS11.